The primary structure comprises 426 residues: Large envelope protein (426 aa).

The N-myristoyl glycine; by host moiety is linked to residue glycine 2. Positions 2–143 (GNNIKVTFNP…PPLRDTHPHL (142 aa)) are pre-S1. The interval 2-202 (GNNIKVTFNP…PSTTGDPAQS (201 aa)) is pre-S. The Virion surface; in external conformation segment spans residues 2–209 (GNNIKVTFNP…AQSPEMSPSS (208 aa)). Residues 2 to 281 (GNNIKVTFNP…NGFRWMYLRR (280 aa)) are Intravirion; in internal conformation-facing. Asparagine 3 carries an N-linked (GlcNAc...) asparagine glycan. The segment at 107-142 (IRDIPRGLVPPQTPTNRDQGRKPTPPTPPLRDTHPH) is disordered. A pre-S2 region spans residues 144–202 (TMKNQTFHLQGFVDGLRDLTTTERQHNAYGDPFTTLSPVVPTVSTILSPPSTTGDPAQS). A helical membrane pass occupies residues 210 to 230 (LLGLLAGLQVVYFLWTKILTI). At 231–281 (AQNLDWWWTSLSFPGGIPECTGQNSQFQTCKHLPTSCPPTCNGFRWMYLRR) the chain is on the intravirion; in external conformation side. The helical transmembrane segment at 282–302 (FIIYLLVLLLCLIFLLVLLDW) threads the bilayer. Residues 303–374 (KGLIPVCPIQ…WALARFSWLN (72 aa)) lie on the Virion surface side of the membrane. Asparagine 346 is a glycosylation site (N-linked (GlcNAc...) asparagine; by host). The chain crosses the membrane as a helical span at residues 375 to 395 (LLVPLLQWLGGISLIAWFLLI). The Intravirion portion of the chain corresponds to 396–401 (WMIWFW). A helical transmembrane segment spans residues 402–424 (GPALLSILPPFIPIFVLFFLIWV). Residues 425 to 426 (YI) are Virion surface-facing.

This sequence belongs to the orthohepadnavirus major surface antigen family. In its internal form (Li-HBsAg), interacts with the capsid protein and with the isoform S. Interacts with host chaperone CANX. In terms of assembly, associates with host chaperone CANX through its pre-S2 N glycan; this association may be essential for isoform M proper secretion. As to quaternary structure, interacts with isoform L. Interacts with the antigens of satellite virus HDV (HDVAgs); this interaction is required for encapsidation of HDV genomic RNA. Post-translationally, isoform M is N-terminally acetylated by host at a ratio of 90%, and N-glycosylated by host at the pre-S2 region. Myristoylated.

It localises to the virion membrane. The large envelope protein exists in two topological conformations, one which is termed 'external' or Le-HBsAg and the other 'internal' or Li-HBsAg. In its external conformation the protein attaches the virus to cell receptors and thereby initiating infection. This interaction determines the species specificity and liver tropism. This attachment induces virion internalization predominantly through caveolin-mediated endocytosis. The large envelope protein also assures fusion between virion membrane and endosomal membrane. In its internal conformation the protein plays a role in virion morphogenesis and mediates the contact with the nucleocapsid like a matrix protein. Functionally, the middle envelope protein plays an important role in the budding of the virion. It is involved in the induction of budding in a nucleocapsid independent way. In this process the majority of envelope proteins bud to form subviral lipoprotein particles of 22 nm of diameter that do not contain a nucleocapsid. This is Large envelope protein from Marmota monax (Woodchuck).